The sequence spans 275 residues: Expansin-A23 (275 aa).

The N-terminal stretch at Met1–Gly27 is a signal peptide. The Expansin-like EG45 domain occupies Gln72–Gly182. The region spanning Tyr192 to Gly271 is the Expansin-like CBD domain.

It belongs to the expansin family. Expansin A subfamily.

Its subcellular location is the secreted. It localises to the cell wall. It is found in the membrane. In terms of biological role, causes loosening and extension of plant cell walls by disrupting non-covalent bonding between cellulose microfibrils and matrix glucans. No enzymatic activity has been found. The sequence is that of Expansin-A23 (EXPA23) from Arabidopsis thaliana (Mouse-ear cress).